We begin with the raw amino-acid sequence, 811 residues long: Ribosome biogenesis protein ERB1 (811 aa).

Positions 1–11 (MARNSKATDTP) are enriched in polar residues. Positions 1–138 (MARNSKATDT…VHTKFSDGRP (138 aa)) are disordered. Residues 27 to 96 (EDAEESSSDE…LSDVDSEEFS (70 aa)) show a composition bias toward acidic residues. Polar residues predominate over residues 104–121 (ASITDKLSGTKIRSYSNA). Over residues 128–138 (EVHTKFSDGRP) the composition is skewed to basic and acidic residues. The segment at 270–386 (RFVPSKHEAK…LRKVPGYQEG (117 aa)) is required for interaction with NOP7. The segment at 386-422 (GLRERFERCLDLYLAPRTRHNKLNIDPDSLIPELPSP) is required for interaction with YTM1. 2 WD repeats span residues 438–477 (GHTEKIRTLSISPDGLWLATGSDDGSVRIWEILTGRQVYK) and 485–525 (NTDD…FDIE). The tract at residues 547–566 (TKNSNIKVNSDDEDEEVEKA) is disordered. WD repeat units lie at residues 595-637 (QCRK…SQSP), 640-678 (KSKGIIMDAKFHPFKPQLFVASQRYIRIYDLAQQVLVKK), 681-720 (PGARWLSNIDIHPRGDNLLASSYDKRVLWHDLDLSSTPYK), 724-764 (YHDK…DLMT), and 780-811 (INSLGVLDLVWHPKEAWLFSAGADGTARLWTT).

Belongs to the WD repeat BOP1/ERB1 family. In terms of assembly, component of the NOP7 complex, composed of ERB1, NOP7 and YTM1. The complex is held together by ERB1, which interacts with NOP7 via its N-terminal domain and with YTM1 via a high-affinity interaction between the seven-bladed beta-propeller domains of the 2 proteins. The NOP7 complex associates with the 66S pre-ribosome.

Its subcellular location is the nucleus. The protein resides in the nucleolus. It is found in the nucleoplasm. Component of the NOP7 complex, which is required for maturation of the 25S and 5.8S ribosomal RNAs and formation of the 60S ribosome. The chain is Ribosome biogenesis protein ERB1 from Debaryomyces hansenii (strain ATCC 36239 / CBS 767 / BCRC 21394 / JCM 1990 / NBRC 0083 / IGC 2968) (Yeast).